A 117-amino-acid polypeptide reads, in one-letter code: Large ribosomal subunit protein bL19 (117 aa).

Belongs to the bacterial ribosomal protein bL19 family.

This protein is located at the 30S-50S ribosomal subunit interface and may play a role in the structure and function of the aminoacyl-tRNA binding site. The polypeptide is Large ribosomal subunit protein bL19 (Shewanella pealeana (strain ATCC 700345 / ANG-SQ1)).